The sequence spans 430 residues: Enolase (430 aa).

Glutamine 162 lines the (2R)-2-phosphoglycerate pocket. Catalysis depends on glutamate 204, which acts as the Proton donor. Mg(2+)-binding residues include aspartate 241, glutamate 283, and aspartate 310. Residues lysine 335, arginine 364, serine 365, and lysine 386 each coordinate (2R)-2-phosphoglycerate. Lysine 335 serves as the catalytic Proton acceptor.

It belongs to the enolase family. It depends on Mg(2+) as a cofactor.

Its subcellular location is the cytoplasm. The protein resides in the secreted. It localises to the cell surface. It carries out the reaction (2R)-2-phosphoglycerate = phosphoenolpyruvate + H2O. It functions in the pathway carbohydrate degradation; glycolysis; pyruvate from D-glyceraldehyde 3-phosphate: step 4/5. Catalyzes the reversible conversion of 2-phosphoglycerate (2-PG) into phosphoenolpyruvate (PEP). It is essential for the degradation of carbohydrates via glycolysis. The sequence is that of Enolase from Mycobacteroides abscessus (strain ATCC 19977 / DSM 44196 / CCUG 20993 / CIP 104536 / JCM 13569 / NCTC 13031 / TMC 1543 / L948) (Mycobacterium abscessus).